Consider the following 249-residue polypeptide: Probable transcriptional regulatory protein Dtur_1615 (249 aa).

The protein belongs to the TACO1 family.

It is found in the cytoplasm. In Dictyoglomus turgidum (strain DSM 6724 / Z-1310), this protein is Probable transcriptional regulatory protein Dtur_1615.